The primary structure comprises 31 residues: Cytochrome b6-f complex subunit 6 (31 aa).

Residues 3 to 23 form a helical membrane-spanning segment; sequence LIIGYIILLACAFGLAAGLYF.

It belongs to the PetL family. As to quaternary structure, the 4 large subunits of the cytochrome b6-f complex are cytochrome b6, subunit IV (17 kDa polypeptide, PetD), cytochrome f and the Rieske protein, while the 4 small subunits are PetG, PetL, PetM and PetN. The complex functions as a dimer.

The protein localises to the plastid. It localises to the chloroplast thylakoid membrane. Component of the cytochrome b6-f complex, which mediates electron transfer between photosystem II (PSII) and photosystem I (PSI), cyclic electron flow around PSI, and state transitions. PetL is important for photoautotrophic growth as well as for electron transfer efficiency and stability of the cytochrome b6-f complex. This is Cytochrome b6-f complex subunit 6 from Guillardia theta (Cryptophyte).